Here is a 347-residue protein sequence, read N- to C-terminus: tRNA N6-adenosine threonylcarbamoyltransferase (347 aa).

Residues histidine 111 and histidine 115 each coordinate Fe cation. Residues 134–138, aspartate 167, glycine 180, and asparagine 277 each bind substrate; that span reads LISGG. Aspartate 305 contributes to the Fe cation binding site.

Belongs to the KAE1 / TsaD family. The cofactor is Fe(2+).

The protein resides in the cytoplasm. It carries out the reaction L-threonylcarbamoyladenylate + adenosine(37) in tRNA = N(6)-L-threonylcarbamoyladenosine(37) in tRNA + AMP + H(+). In terms of biological role, required for the formation of a threonylcarbamoyl group on adenosine at position 37 (t(6)A37) in tRNAs that read codons beginning with adenine. Is involved in the transfer of the threonylcarbamoyl moiety of threonylcarbamoyl-AMP (TC-AMP) to the N6 group of A37, together with TsaE and TsaB. TsaD likely plays a direct catalytic role in this reaction. This chain is tRNA N6-adenosine threonylcarbamoyltransferase, found in Actinobacillus pleuropneumoniae serotype 5b (strain L20).